We begin with the raw amino-acid sequence, 460 residues long: UDP-N-acetylmuramoylalanine--D-glutamate ligase (460 aa).

115-121 (GTNGKTT) is a binding site for ATP.

This sequence belongs to the MurCDEF family.

The protein resides in the cytoplasm. The enzyme catalyses UDP-N-acetyl-alpha-D-muramoyl-L-alanine + D-glutamate + ATP = UDP-N-acetyl-alpha-D-muramoyl-L-alanyl-D-glutamate + ADP + phosphate + H(+). Its pathway is cell wall biogenesis; peptidoglycan biosynthesis. Cell wall formation. Catalyzes the addition of glutamate to the nucleotide precursor UDP-N-acetylmuramoyl-L-alanine (UMA). The chain is UDP-N-acetylmuramoylalanine--D-glutamate ligase from Salinibacter ruber (strain DSM 13855 / M31).